A 513-amino-acid polypeptide reads, in one-letter code: Maturase K (513 aa).

The protein belongs to the intron maturase 2 family. MatK subfamily.

It is found in the plastid. Its subcellular location is the chloroplast. Usually encoded in the trnK tRNA gene intron. Probably assists in splicing its own and other chloroplast group II introns. The protein is Maturase K of Panicum capillare (Witchgrass).